Reading from the N-terminus, the 459-residue chain is Type IV methyl-directed restriction enzyme EcoKMcrB subunit (459 aa).

GTP-binding positions include 201-208, 300-303, and 333-336; these read GPPGVGKT, DKRG, and NTAD.

Its function is as follows. Recognizes N4- and C5-methylcytosine (and 5-hydroxy-methylcytosines) produced by a broad range of DNA methylases and appears to act against 5-methylcytosine preceded by a purine residue. Binds to DNA containing methylated cytosines; also binds to GTP. Isoform 33 kDa is less active than isoform 51 kDa and may play a role in regulating the activity of isoform 51 kDa by competing with it in DNA and protein binding abilities. The protein is Type IV methyl-directed restriction enzyme EcoKMcrB subunit (mcrB) of Escherichia coli (strain K12).